Reading from the N-terminus, the 553-residue chain is Arginine--tRNA ligase (553 aa).

A 'HIGH' region motif is present at residues 130–140 (ANPTGDLHIGH).

It belongs to the class-I aminoacyl-tRNA synthetase family. Monomer.

Its subcellular location is the cytoplasm. It carries out the reaction tRNA(Arg) + L-arginine + ATP = L-arginyl-tRNA(Arg) + AMP + diphosphate. This Staphylococcus aureus (strain MSSA476) protein is Arginine--tRNA ligase.